The following is a 311-amino-acid chain: Iron-binding protein YfeA (311 aa).

An N-terminal signal peptide occupies residues 1-31 (MIERLNSPFLRAAALFTIVAFSSLISTAALA). Positions 76, 141, 207, and 282 each coordinate Fe(2+).

This sequence belongs to the bacterial solute-binding protein 9 family. In terms of assembly, monomer.

It is found in the periplasm. Part of the ATP-binding cassette (ABC) transport system YfeABC involved in iron import. Binds iron with high affinity and specificity and delivers it to the membrane permease for translocation into the cytoplasm. Also binds Mn(2+) and Zn(2+). The protein is Iron-binding protein YfeA (yfeA) of Yersinia pestis.